Consider the following 452-residue polypeptide: Enolase (452 aa).

Q167 serves as a coordination point for (2R)-2-phosphoglycerate. E209 acts as the Proton donor in catalysis. The Mg(2+) site is built by D250, E310, and D337. The (2R)-2-phosphoglycerate site is built by K362, R391, S392, and K413. The active-site Proton acceptor is K362.

This sequence belongs to the enolase family. The cofactor is Mg(2+).

The protein localises to the cytoplasm. It is found in the secreted. The protein resides in the cell surface. It catalyses the reaction (2R)-2-phosphoglycerate = phosphoenolpyruvate + H2O. It functions in the pathway carbohydrate degradation; glycolysis; pyruvate from D-glyceraldehyde 3-phosphate: step 4/5. Catalyzes the reversible conversion of 2-phosphoglycerate (2-PG) into phosphoenolpyruvate (PEP). It is essential for the degradation of carbohydrates via glycolysis. This Mycoplasmopsis synoviae (strain 53) (Mycoplasma synoviae) protein is Enolase.